The primary structure comprises 263 residues: Ribonuclease HII (263 aa).

The RNase H type-2 domain maps to 39–257 (AFFTGIDEAG…VKPAAAPHAA (219 aa)). A divalent metal cation contacts are provided by Asp45, Glu46, and Asp157.

Belongs to the RNase HII family. Mn(2+) is required as a cofactor. Requires Mg(2+) as cofactor.

The protein resides in the cytoplasm. It carries out the reaction Endonucleolytic cleavage to 5'-phosphomonoester.. Functionally, endonuclease that specifically degrades the RNA of RNA-DNA hybrids. The chain is Ribonuclease HII from Oleidesulfovibrio alaskensis (strain ATCC BAA-1058 / DSM 17464 / G20) (Desulfovibrio alaskensis).